The chain runs to 102 residues: MRGRLQGVELIARDWIGLMVEVVESPNHSEVGIKGEVVDETQNTLKIMTEKGLKVVAKRGRTFRVWYKGKIMRIKGDLINFRPEDRIKRGLMMLKRAKGVWI.

This sequence belongs to the eukaryotic/archaeal RNase P protein component 1 family. Consists of a catalytic RNA component and at least 4-5 protein subunits.

The protein localises to the cytoplasm. The catalysed reaction is Endonucleolytic cleavage of RNA, removing 5'-extranucleotides from tRNA precursor.. Its function is as follows. Part of ribonuclease P, a protein complex that generates mature tRNA molecules by cleaving their 5'-ends. This chain is Ribonuclease P protein component 1, found in Archaeoglobus fulgidus (strain ATCC 49558 / DSM 4304 / JCM 9628 / NBRC 100126 / VC-16).